Reading from the N-terminus, the 289-residue chain is ATP synthase gamma chain (289 aa).

The protein belongs to the ATPase gamma chain family. F-type ATPases have 2 components, CF(1) - the catalytic core - and CF(0) - the membrane proton channel. CF(1) has five subunits: alpha(3), beta(3), gamma(1), delta(1), epsilon(1). CF(0) has three main subunits: a, b and c.

Its subcellular location is the cell inner membrane. In terms of biological role, produces ATP from ADP in the presence of a proton gradient across the membrane. The gamma chain is believed to be important in regulating ATPase activity and the flow of protons through the CF(0) complex. The protein is ATP synthase gamma chain of Azorhizobium caulinodans (strain ATCC 43989 / DSM 5975 / JCM 20966 / LMG 6465 / NBRC 14845 / NCIMB 13405 / ORS 571).